The sequence spans 118 residues: Large ribosomal subunit protein bL20c (118 aa).

It belongs to the bacterial ribosomal protein bL20 family.

It localises to the plastid. In terms of biological role, binds directly to 23S ribosomal RNA and is necessary for the in vitro assembly process of the 50S ribosomal subunit. It is not involved in the protein synthesizing functions of that subunit. The chain is Large ribosomal subunit protein bL20c from Aneura mirabilis (Parasitic liverwort).